A 207-amino-acid chain; its full sequence is Superoxide dismutase [Mn] (207 aa).

Mn(2+) contacts are provided by His-28, His-76, Asp-160, and His-164.

It belongs to the iron/manganese superoxide dismutase family. It depends on Mn(2+) as a cofactor.

The enzyme catalyses 2 superoxide + 2 H(+) = H2O2 + O2. Functionally, destroys superoxide anion radicals which are normally produced within the cells and which are toxic to biological systems. The sequence is that of Superoxide dismutase [Mn] (sodA) from Nocardia asteroides.